Here is a 487-residue protein sequence, read N- to C-terminus: Chromosomal replication initiator protein DnaA (487 aa).

The tract at residues 1–79 (MPNSMWHQCL…QAPRVMMKVG (79 aa)) is domain I, interacts with DnaA modulators. Residues 78-138 (VGSAPKPTDP…PAPKAQAERR (61 aa)) are disordered. The domain II stretch occupies residues 79–150 (GSAPKPTDPV…QVEGDIKHQS (72 aa)). The domain III, AAA+ region stretch occupies residues 151–367 (FLNETFTFDT…GALRLVIANA (217 aa)). The ATP site is built by glycine 195, glycine 197, lysine 198, and threonine 199. The segment at 368–487 (HFTGSEITPP…YQNFMRLLTT (120 aa)) is domain IV, binds dsDNA.

Belongs to the DnaA family. In terms of assembly, oligomerizes as a right-handed, spiral filament on DNA at oriC.

It localises to the cytoplasm. Plays an essential role in the initiation and regulation of chromosomal replication. ATP-DnaA binds to the origin of replication (oriC) to initiate formation of the DNA replication initiation complex once per cell cycle. Binds the DnaA box (a 9 base pair repeat at the origin) and separates the double-stranded (ds)DNA. Forms a right-handed helical filament on oriC DNA; dsDNA binds to the exterior of the filament while single-stranded (ss)DNA is stabiized in the filament's interior. The ATP-DnaA-oriC complex binds and stabilizes one strand of the AT-rich DNA unwinding element (DUE), permitting loading of DNA polymerase. After initiation quickly degrades to an ADP-DnaA complex that is not apt for DNA replication. Binds acidic phospholipids. This is Chromosomal replication initiator protein DnaA from Marinobacter nauticus (strain ATCC 700491 / DSM 11845 / VT8) (Marinobacter aquaeolei).